Consider the following 412-residue polypeptide: Burnettramic acids biosynthesis cluster protein E (412 aa).

Disordered regions lie at residues M1 to R66, R308 to T342, and S386 to G412. Residues E36 to E58 are compositionally biased toward acidic residues. Polar residues predominate over residues E395–S404.

It participates in mycotoxin biosynthesis. Functionally, part of the gene cluster that mediates the biosynthesis of burnettramic acids, an unusual class of bolaamphiphilic pyrrolizidinediones that display potent antibacterial, antifungal, and cytotoxic activities. The first step of the biosynthesis of burnettramic acids is the hydroxylation of proline by the proline hydroxylase buaE to generate 4-hydroxyproline. The PKS-NRPS buaA and trans-enoyl reductase buaC construct the highly reduced polyketide chain, and the condensation (C) domain of buaA then catalyzes the amide bond formation with the activated 4-hydroxyproline. This is followed by the R domain releasing the nascent polyketide-peptide directly via a Dieckmann condensation to afford a tetramic acid fused to the hydroxyproline, generating the bicyclic pyrrolidinedione moiety. The cytochrome P450 monooxygenases buaD and buaG are likely responsible for the multiple hydroxylations on the polyketide chain and its terminus, although in the heterologous context, buaD does not appear to be required. Therefore, while buaG may be a multifunctional cytochrome P450 monooxygenase, it cannot be ruled out that the two secondary alcohols on the polyketide chain could have an acetate origin. Finally, the glycosyltransferase buaB transfers beta-D-mannose to the aglycone burnettramic acid A to form burnettramic acid A. Burnettramic acid B is a minor cis-pyrrolizidine epimer of burnettramic acid A and it is likely that small amounts of it form naturally in acidic environments. The role of the uncharacterized protein buaF in the biosynthesis of burnettramic acids has still to be determined. The chain is Burnettramic acids biosynthesis cluster protein E from Petromyces alliaceus (Aspergillus alliaceus).